Reading from the N-terminus, the 360-residue chain is Biotin synthase 2 (360 aa).

The Radical SAM core domain maps to 53 to 280; sequence RRVKLNFLVN…TAEVRLSGGR (228 aa). The [4Fe-4S] cluster site is built by cysteine 68, cysteine 72, and cysteine 75. Positions 112, 145, 205, and 275 each coordinate [2Fe-2S] cluster.

Belongs to the radical SAM superfamily. Biotin synthase family. Homodimer. [4Fe-4S] cluster is required as a cofactor. [2Fe-2S] cluster serves as cofactor.

It carries out the reaction (4R,5S)-dethiobiotin + (sulfur carrier)-SH + 2 reduced [2Fe-2S]-[ferredoxin] + 2 S-adenosyl-L-methionine = (sulfur carrier)-H + biotin + 2 5'-deoxyadenosine + 2 L-methionine + 2 oxidized [2Fe-2S]-[ferredoxin]. Its pathway is cofactor biosynthesis; biotin biosynthesis; biotin from 7,8-diaminononanoate: step 2/2. Functionally, catalyzes the conversion of dethiobiotin (DTB) to biotin by the insertion of a sulfur atom into dethiobiotin via a radical-based mechanism. In Frankia casuarinae (strain DSM 45818 / CECT 9043 / HFP020203 / CcI3), this protein is Biotin synthase 2.